The sequence spans 339 residues: Protein FAM50A (339 aa).

Residues 1 to 31 (MAQYKGAASEAGRAMHLMKKREKQREQMEQM) form a disordered region. An N-acetylalanine modification is found at Ala2. A Glycyl lysine isopeptide (Lys-Gly) (interchain with G-Cter in SUMO2) cross-link involves residue Lys100. The tract at residues 150–177 (TTKKKKLGKNPDVDTSFLPDRDREEEEN) is disordered. The Nuclear localization signal motif lies at 152–155 (KKKK). Basic and acidic residues predominate over residues 168-177 (PDRDREEEEN).

This sequence belongs to the FAM50 family. As to quaternary structure, interacts with EFTUD2, a component of the spliceosome U5 complex. Interacts with DDX41, a component of the spliceosome C complex. In terms of tissue distribution, widely expressed in embryonic and adult tissues.

The protein localises to the nucleus. Functionally, probably involved in the regulation of pre-mRNA splicing. The protein is Protein FAM50A (Fam50a) of Mus musculus (Mouse).